The following is a 273-amino-acid chain: 4-hydroxy-tetrahydrodipicolinate reductase (273 aa).

12-17 serves as a coordination point for NAD(+); that stretch reads GSGGRM. Arginine 39 serves as a coordination point for NADP(+). Residues 102–104 and 126–129 each bind NAD(+); these read GTT and AANF. Histidine 159 (proton donor/acceptor) is an active-site residue. (S)-2,3,4,5-tetrahydrodipicolinate is bound at residue histidine 160. Lysine 163 (proton donor) is an active-site residue. 169 to 170 contributes to the (S)-2,3,4,5-tetrahydrodipicolinate binding site; the sequence is GT.

Belongs to the DapB family. Homotetramer.

Its subcellular location is the cytoplasm. The enzyme catalyses (S)-2,3,4,5-tetrahydrodipicolinate + NAD(+) + H2O = (2S,4S)-4-hydroxy-2,3,4,5-tetrahydrodipicolinate + NADH + H(+). It catalyses the reaction (S)-2,3,4,5-tetrahydrodipicolinate + NADP(+) + H2O = (2S,4S)-4-hydroxy-2,3,4,5-tetrahydrodipicolinate + NADPH + H(+). Its pathway is amino-acid biosynthesis; L-lysine biosynthesis via DAP pathway; (S)-tetrahydrodipicolinate from L-aspartate: step 4/4. Catalyzes the conversion of 4-hydroxy-tetrahydrodipicolinate (HTPA) to tetrahydrodipicolinate. This chain is 4-hydroxy-tetrahydrodipicolinate reductase, found in Serratia proteamaculans (strain 568).